Here is a 613-residue protein sequence, read N- to C-terminus: tRNA 5-methylaminomethyl-2-thiouridine biosynthesis bifunctional protein MnmC (613 aa).

Residues 1-225 (MKKAKLIFKD…KREMIKAYLE (225 aa)) form a tRNA (mnm(5)s(2)U34)-methyltransferase region. Residues 252 to 613 (IGAGISSAVL…FLIRKLKKGL (362 aa)) form an FAD-dependent cmnm(5)s(2)U34 oxidoreductase region.

It in the N-terminal section; belongs to the methyltransferase superfamily. tRNA (mnm(5)s(2)U34)-methyltransferase family. The protein in the C-terminal section; belongs to the DAO family. The cofactor is FAD.

It localises to the cytoplasm. The enzyme catalyses 5-aminomethyl-2-thiouridine(34) in tRNA + S-adenosyl-L-methionine = 5-methylaminomethyl-2-thiouridine(34) in tRNA + S-adenosyl-L-homocysteine + H(+). Its function is as follows. Catalyzes the last two steps in the biosynthesis of 5-methylaminomethyl-2-thiouridine (mnm(5)s(2)U) at the wobble position (U34) in tRNA. Catalyzes the FAD-dependent demodification of cmnm(5)s(2)U34 to nm(5)s(2)U34, followed by the transfer of a methyl group from S-adenosyl-L-methionine to nm(5)s(2)U34, to form mnm(5)s(2)U34. The sequence is that of tRNA 5-methylaminomethyl-2-thiouridine biosynthesis bifunctional protein MnmC from Campylobacter jejuni subsp. jejuni serotype O:6 (strain 81116 / NCTC 11828).